The primary structure comprises 111 residues: UPF0125 protein SO_1475 (111 aa).

Residues 88-111 (VRRRRADKAKDEGRANKVTGGRVS) form a disordered region.

This sequence belongs to the UPF0125 (RnfH) family.

This chain is UPF0125 protein SO_1475, found in Shewanella oneidensis (strain ATCC 700550 / JCM 31522 / CIP 106686 / LMG 19005 / NCIMB 14063 / MR-1).